Consider the following 173-residue polypeptide: Adenine phosphoribosyltransferase (173 aa).

It belongs to the purine/pyrimidine phosphoribosyltransferase family. Homodimer.

The protein resides in the cytoplasm. It carries out the reaction AMP + diphosphate = 5-phospho-alpha-D-ribose 1-diphosphate + adenine. Its pathway is purine metabolism; AMP biosynthesis via salvage pathway; AMP from adenine: step 1/1. Catalyzes a salvage reaction resulting in the formation of AMP, that is energically less costly than de novo synthesis. This is Adenine phosphoribosyltransferase from Petrotoga mobilis (strain DSM 10674 / SJ95).